A 496-amino-acid chain; its full sequence is Lysine--tRNA ligase (496 aa).

Residues E409 and E416 each contribute to the Mg(2+) site.

It belongs to the class-II aminoacyl-tRNA synthetase family. In terms of assembly, homodimer. It depends on Mg(2+) as a cofactor.

The protein resides in the cytoplasm. The enzyme catalyses tRNA(Lys) + L-lysine + ATP = L-lysyl-tRNA(Lys) + AMP + diphosphate. In Streptococcus suis (strain 05ZYH33), this protein is Lysine--tRNA ligase.